The primary structure comprises 139 residues: ATP synthase epsilon chain (139 aa).

The interval 89-110 (EARAEQARAEAEARRREAQSER) is disordered.

It belongs to the ATPase epsilon chain family. As to quaternary structure, F-type ATPases have 2 components, CF(1) - the catalytic core - and CF(0) - the membrane proton channel. CF(1) has five subunits: alpha(3), beta(3), gamma(1), delta(1), epsilon(1). CF(0) has three main subunits: a, b and c.

Its subcellular location is the cell membrane. Its function is as follows. Produces ATP from ADP in the presence of a proton gradient across the membrane. This Chloroflexus aurantiacus (strain ATCC 29366 / DSM 635 / J-10-fl) protein is ATP synthase epsilon chain.